We begin with the raw amino-acid sequence, 216 residues long: Redox-sensing transcriptional repressor Rex (216 aa).

Residues 20 to 59 (QYYRLFKSLVEENVTRTNSQLISEKIGVDAATIRRDFSLF) constitute a DNA-binding region (H-T-H motif). 94–99 (GVGNLG) serves as a coordination point for NAD(+).

Belongs to the transcriptional regulatory Rex family. As to quaternary structure, homodimer.

It localises to the cytoplasm. Functionally, modulates transcription in response to changes in cellular NADH/NAD(+) redox state. The polypeptide is Redox-sensing transcriptional repressor Rex (Lactococcus lactis subsp. cremoris (strain SK11)).